A 395-amino-acid chain; its full sequence is Multiple organellar RNA editing factor 8, chloroplastic/mitochondrial (395 aa).

The transit peptide at 1–56 (MATHTISRSILCRPAKSLSFLFTRSFASSAPLAKSPASSLLSRSRPLVAAFSSVFR) directs the protein to the chloroplast and mitochondrion. The span at 211-236 (ANERNRRNDRPRNNDRSRNFERRREN) shows a compositional bias: basic and acidic residues. The disordered stretch occupies residues 211–395 (ANERNRRNDR…RDGSGNPYQG (185 aa)). Residues 240-300 (GPPPQRPPMG…GPRHPPPYGA (61 aa)) show a composition bias toward pro residues. Low complexity predominate over residues 313–334 (QNYGGTPPPNYGGAPPANNMGG). Residues 335-355 (APPPNYGGGPPPQYGAVPPPQ) show a composition bias toward pro residues. Over residues 356 to 385 (YGGAPPQNNNYQQQGSGMQQPQYQNNYPPN) the composition is skewed to low complexity.

This sequence belongs to the MORF family. In terms of assembly, interacts with protoporphyrinogen oxidase 1 PPOX1. Interacts with PCMP-H52/MEF10. Homodimer and heterodimers with MORF1/RIP8, MORF2/RIP2, MORF3/RIP3, MORF4/RIP4, MORF5/RIP5, MORF6/RIP6 and MORF7/RIP7. Interacts with RBG3/ORRM3. Interacts with PCMP-A2/PMD1. Interacts with ORRM1 and VAT3/OZ1. Interacts with PCMP-H13/MEF35. Interacts with RBG5/ORRM4. Interacts with ORRM6.

The protein resides in the mitochondrion. It localises to the plastid. It is found in the chloroplast. In terms of biological role, involved in organellar RNA editing. Required for the processing of numerous RNA editing sites in mitochondria and plastids. Binds to the plastid RARE1 factor, a pentatricopeptide repeat-containing protein involved in RNA editing. The protein is Multiple organellar RNA editing factor 8, chloroplastic/mitochondrial of Arabidopsis thaliana (Mouse-ear cress).